A 175-amino-acid chain; its full sequence is Ribosome maturation factor RimM (175 aa).

One can recognise a PRC barrel domain in the interval 96–175; sequence EGDYYWHDLI…TIEVDWDAGF (80 aa).

Belongs to the RimM family. As to quaternary structure, binds ribosomal protein uS19.

It localises to the cytoplasm. Its function is as follows. An accessory protein needed during the final step in the assembly of 30S ribosomal subunit, possibly for assembly of the head region. Essential for efficient processing of 16S rRNA. May be needed both before and after RbfA during the maturation of 16S rRNA. It has affinity for free ribosomal 30S subunits but not for 70S ribosomes. This Actinobacillus succinogenes (strain ATCC 55618 / DSM 22257 / CCUG 43843 / 130Z) protein is Ribosome maturation factor RimM.